Consider the following 341-residue polypeptide: MEEGSLWRQWTMFRSLLSILQWWGFNVTVIIMNKWIFQKLDFKFPLSVSCVHFICSSIGAYIVIKVLKLKPLIVVDPEDRWRRIFPMSFVFCINIVLGNISLRYIPVSFMQTIKSLTPATTVVLQWLVWRKYFDWRIWASLVPIVGGILLTSITELSFNVFGFCAALFGCLATSTKTILAESLLHGYKFDSINTVYYMAPFATMILGLPAFLLERNGILDWFEAHPSPWSALIILFNSGVLAFCLNFSIFYVIQSTTAVTFNVAGNLKVAVAVFVSWMIFRNPISPMNAVGCGITLVGCTFYGYVRHMLSQQQPGTPRTPRTPRNKMELIPLVNDKLESKI.

8 helical membrane passes run 17–37 (LSIL…KWIF), 44–64 (FPLS…YIVI), 89–109 (FVFC…PVSF), 141–161 (LVPI…FNVF), 192–212 (INTV…PAFL), 233–253 (IILF…FYVI), 260–280 (TFNV…WMIF), and 284–304 (ISPM…FYGY). The 120-residue stretch at 33-152 (NKWIFQKLDF…PIVGGILLTS (120 aa)) folds into the EamA domain.

This sequence belongs to the TPT transporter family. TPT (TC 2.A.7.9) subfamily. In terms of tissue distribution, expressed in rosette leaves, flowers and siliques.

It is found in the golgi apparatus membrane. GDP-mannose transporter that may be involved in the import of GDP-mannose from the cytoplasm into the Golgi lumen. The protein is GDP-mannose transporter GONST5 (GONST5) of Arabidopsis thaliana (Mouse-ear cress).